The following is a 254-amino-acid chain: Caffeoyl-CoA O-methyltransferase (254 aa).

Residues methionine 1 to valine 25 are disordered. Positions glutamate 7–valine 25 are enriched in basic and acidic residues. A substrate-binding site is contributed by lysine 28. S-adenosyl-L-methionine-binding positions include threonine 70, glutamate 92, glycine 94–valine 95, serine 100, aspartate 118, and alanine 147. Position 170 (aspartate 170) interacts with substrate. Residue aspartate 170 coordinates a divalent metal cation. Aspartate 172 contributes to the S-adenosyl-L-methionine binding site. A divalent metal cation-binding residues include aspartate 196 and asparagine 197. Asparagine 201 provides a ligand contact to substrate.

It belongs to the class I-like SAM-binding methyltransferase superfamily. Cation-dependent O-methyltransferase family. CCoAMT subfamily. Requires a divalent metal cation as cofactor.

The catalysed reaction is (E)-caffeoyl-CoA + S-adenosyl-L-methionine = (E)-feruloyl-CoA + S-adenosyl-L-homocysteine + H(+). It participates in aromatic compound metabolism; phenylpropanoid biosynthesis. In terms of biological role, methylates caffeoyl-CoA to feruloyl-CoA and 5-hydroxyferuloyl-CoA to sinapoyl-CoA. Plays a role in the synthesis of feruloylated polysaccharides. Involved in the reinforcement of the plant cell wall. Also involved in the responding to wounding or pathogen challenge by the increased formation of cell wall-bound ferulic acid polymers. This is Caffeoyl-CoA O-methyltransferase from Mesembryanthemum crystallinum (Common ice plant).